Consider the following 634-residue polypeptide: Sodium-dependent neutral amino acid transporter B(0)AT1 (634 aa).

Residues 1-41 (MVRLVLPNPGLEDRIPSLDELEVIEKEEASSRPKWDNKAQY) lie on the Cytoplasmic side of the membrane. A Phosphoserine modification is found at S17. Residues 42 to 62 (MLTCVGFCVGLGNVWRFPYLC) form a helical membrane-spanning segment. Residues 63 to 65 (QSH) lie on the Extracellular side of the membrane. The chain crosses the membrane as a helical span at residues 66–86 (GGGAFMIPFLILLVLEGIPLL). Topologically, residues 87–119 (HLEFAIGQRLRKGSVGVWSSIHPALKGVGIASM) are cytoplasmic. A helical transmembrane segment spans residues 120 to 140 (FVSFMVGLYYNTIIAWVMWYF). Residues 141–192 (FNSFQEPLPWSECPLNQNQTGYVEECAKSSSVDYFWYRETLNISTSISDSGS) lie on the Extracellular side of the membrane. N-linked (GlcNAc...) asparagine glycans are attached at residues N158 and N182. Residues 193–213 (IQWWILLCLTCAWSVLYVCTI) traverse the membrane as a helical segment. Residues 214-221 (RGIETTGK) lie on the Cytoplasmic side of the membrane. The helical transmembrane segment at 222–242 (AVYITSTLPYVVLTIFLIRGL) threads the bilayer. Residues 243 to 268 (TLKGATNGIVFLFTPNITELSNPNTW) are Extracellular-facing. An N-linked (GlcNAc...) asparagine glycan is attached at N258. The helical transmembrane segment at 269-289 (LDAGAQVFYSFSLAFGGLISF) threads the bilayer. Over 290-304 (SSYNSVHNNCEMDSV) the chain is Cytoplasmic. Residues 305 to 325 (IVSIINGFTSVYAATVVYSII) form a helical membrane-spanning segment. The Extracellular portion of the chain corresponds to 326–413 (GFRATERFDD…TEAITKMPVS (88 aa)). 2 N-linked (GlcNAc...) asparagine glycosylation sites follow: N354 and N368. A helical membrane pass occupies residues 414–434 (PLWSVLFFIMLFCLGLSSMFG). The Cytoplasmic portion of the chain corresponds to 435–456 (NMEGVVVPLQDLNITPKKWPKE). Residues 457–477 (LLTGLICLGTYLIAFIFTLNS) traverse the membrane as a helical segment. Residues 478–490 (GQYWLSLLDSYAG) lie on the Extracellular side of the membrane. The helical transmembrane segment at 491–511 (SIPLLIIAFCEMFAVVYVYGV) threads the bilayer. Residues 512-531 (DRFNKDIEFMIGHKPNIFWQ) lie on the Cytoplasmic side of the membrane. Residues 532–552 (VTWRVVSPLIMLVIFLFFFVI) form a helical membrane-spanning segment. Residues 553-581 (EVNKQLMYSVWDPDYEEFPKSQKVPYPDW) are Extracellular-facing. The helical transmembrane segment at 582 to 602 (VYAVVVIVAGVPCLTIPCFAI) threads the bilayer. Residues 603-634 (YKLIRNYCQKSGDQHGLVNALSTASVNGDLKN) are Cytoplasmic-facing. The residue at position 627 (S627) is a Phosphoserine.

The protein belongs to the sodium:neurotransmitter symporter (SNF) (TC 2.A.22) family. SLC6A19 subfamily. In terms of assembly, interacts in a tissue-specific manner with ACE2 in small intestine and with CLTRN in the kidney. Interacts with CLTRN; this interaction is required for trafficking of SLC6A19 to the plasma membrane and for its catalytic activation in kidneys. Interacts with ACE2; this interaction is required for trafficking of SLC6A19 to the plasma membrane and for its catalytic activation in intestine. Interacts with ANPEP; the interaction positively regulates its amino acid transporter activity.

The protein resides in the membrane. It carries out the reaction L-alanine(in) + Na(+)(in) = L-alanine(out) + Na(+)(out). The catalysed reaction is L-cysteine(in) + Na(+)(in) = L-cysteine(out) + Na(+)(out). The enzyme catalyses L-glutamine(in) + Na(+)(in) = L-glutamine(out) + Na(+)(out). It catalyses the reaction glycine(in) + Na(+)(in) = glycine(out) + Na(+)(out). It carries out the reaction L-isoleucine(in) + Na(+)(in) = L-isoleucine(out) + Na(+)(out). The catalysed reaction is L-leucine(in) + Na(+)(in) = L-leucine(out) + Na(+)(out). The enzyme catalyses L-methionine(in) + Na(+)(in) = L-methionine(out) + Na(+)(out). It catalyses the reaction L-phenylalanine(in) + Na(+)(in) = L-phenylalanine(out) + Na(+)(out). It carries out the reaction L-serine(in) + Na(+)(in) = L-serine(out) + Na(+)(out). The catalysed reaction is L-tryptophan(in) + Na(+)(in) = L-tryptophan(out) + Na(+)(out). The enzyme catalyses L-tyrosine(in) + Na(+)(in) = L-tyrosine(out) + Na(+)(out). It catalyses the reaction L-valine(in) + Na(+)(in) = L-valine(out) + Na(+)(out). Functionally, transporter that mediates resorption of neutral amino acids across the apical membrane of renal and intestinal epithelial cells. This uptake is sodium-dependent and chloride-independent. Requires CLTRN in kidney or ACE2 in intestine for cell surface expression and amino acid transporter activity. The protein is Sodium-dependent neutral amino acid transporter B(0)AT1 of Rattus norvegicus (Rat).